Here is a 3051-residue protein sequence, read N- to C-terminus: Biorientation of chromosomes in cell division protein 1-like 1 (3051 aa).

Residues 1–33 (MATNPQPQPPPPAPPPPPPQPQPQPPPPPPGPG) show a composition bias toward pro residues. Disordered stretches follow at residues 1–47 (MATN…AGAG), 164–197 (HKEE…SANV), 215–288 (ASAA…CPVE), 301–393 (ILLN…KEDF), and 411–469 (VHTS…VRHA). Over residues 34–47 (AGPGAGGAGGAGAG) the composition is skewed to gly residues. The span at 215 to 227 (ASAARASTETSNA) shows a compositional bias: low complexity. Residues 246–263 (STDKERTSEDMADKEKST) are compositionally biased toward basic and acidic residues. The residue at position 266 (S266) is a Phosphoserine. Residues 312–393 (SEQKNKSTDK…KTVEGTKEDF (82 aa)) show a composition bias toward basic and acidic residues. A compositionally biased stretch (acidic residues) spans 418-443 (SFEEDTEEEVVTSDSMEEGEITSDDE). The residue at position 473 (K473) is an N6-acetyllysine. Phosphoserine occurs at positions 482 and 484. 3 stretches are compositionally biased toward basic and acidic residues: residues 497–527 (IAKE…EKTK), 549–570 (LEPK…EKKV), and 580–653 (SRNV…LERE). A disordered region spans residues 497–1203 (IAKEKEERLL…EKHADHRSTL (707 aa)). Phosphoserine is present on residues S635 and S659. Phosphothreonine is present on residues T660 and T733. 6 stretches are compositionally biased toward basic and acidic residues: residues 671–772 (TDTR…EENI), 804–852 (KDGK…KIQK), 866–878 (RRSE…KCDM), 940–966 (KPDK…KPFE), 984–1021 (TQKD…DGHK), and 1028–1075 (SSKD…ENRR). S1077 carries the post-translational modification Phosphoserine. 2 stretches are compositionally biased toward polar residues: residues 1092 to 1103 (NTLSTPSGSSLQ) and 1135 to 1148 (SKTQ…SQQD). 2 positions are modified to phosphoserine: S1145 and S1318. T1354 bears the Phosphothreonine mark. Disordered regions lie at residues 1456–1550 (KLKH…QSEV), 1700–1725 (GSIS…ETEG), and 1760–1890 (VVLG…TGLG). Residues 1465–1479 (KVKDISIDVERRNEN) show a composition bias toward basic and acidic residues. Over residues 1482 to 1504 (VDTSAGSGSAPSVLHQRNGQTED) the composition is skewed to polar residues. Residues S1531, S1701, and S1710 each carry the phosphoserine modification. A phosphoserine mark is found at S2013, S2025, S2128, and S2203. 6 disordered regions span residues 2189–2210 (DFEG…STSK), 2258–2285 (TSSV…TPAE), 2403–2447 (STEE…FAGR), 2472–2519 (EDKS…AKDP), 2615–2635 (DQAS…FPEE), and 2717–3051 (VENS…KAKR). Low complexity predominate over residues 2191-2207 (EGPMPSAPPEAESPLAS). Residues 2428 to 2439 (AEKEEKHGKECP) are compositionally biased toward basic and acidic residues. Residue S2475 is modified to Phosphoserine. Residues 2483 to 2492 (GSSTASYSAG) show a composition bias toward low complexity. A phosphoserine mark is found at S2501 and S2618. Composition is skewed to basic and acidic residues over residues 2621–2633 (KTGD…KSFP), 2724–2746 (TNEE…KDNA), and 2754–2767 (VEAD…EERH). The segment covering 2780–2789 (SEDEPDDNPD) has biased composition (acidic residues). The span at 2791-2822 (LDSRIETAQRQCPETEPHDTKEENSRDLEELP) shows a compositional bias: basic and acidic residues. Polar residues predominate over residues 2823–2834 (KTSSETNSTTSR). Residues 2848–2864 (TGEKPEQNDDDTIKSQE) show a composition bias toward basic and acidic residues. The span at 2871–2880 (IKRKRGRPRK) shows a compositional bias: basic residues. The a.T hook DNA-binding region spans 2872-2884 (KRKRGRPRKYPVE). Polar residues predominate over residues 2896–2910 (DTGIVTVEQSPSSSK). Phosphoserine occurs at positions 2905 and 2907. Residues 2944-2953 (VRRRGRKPKR) are compositionally biased toward basic residues. S2954 is modified (phosphoserine). Phosphothreonine is present on T2956. 3 positions are modified to phosphoserine: S2958, S2964, and S2973. Glycyl lysine isopeptide (Lys-Gly) (interchain with G-Cter in ubiquitin) cross-links involve residues K2981 and K2982. A compositionally biased stretch (acidic residues) spans 2985 to 2998 (ESDEEEEEEEEDEP). A phosphoserine mark is found at S2986 and S3019. Positions 3000–3020 (GATTRSTTRSEAQRSKTQLSP) are enriched in polar residues. Over residues 3039–3051 (QRVEEAPVKKAKR) the composition is skewed to basic and acidic residues.

It belongs to the BOD1 family. As to quaternary structure, interacts (via COMPASS-Shg1 domain) with SETD1A at stalled replication forks; this interaction mediates FANCD2-dependent nucleosome remodeling at reversed forks protecting them from nucleolytic degradation.

It is found in the chromosome. Its function is as follows. Component of the fork protection machinery required to protect stalled/damaged replication forks from uncontrolled DNA2-dependent resection. Acts by stabilizing RAD51 at stalled replication forks and protecting RAD51 nucleofilaments from the antirecombinogenic activities of FBH1 and BLM. Does not regulate spindle orientation. In Homo sapiens (Human), this protein is Biorientation of chromosomes in cell division protein 1-like 1.